The primary structure comprises 587 residues: MTECKAEVTPSASNGHRVFSYTLESHTAAAFAIMNELRRERQLCDVTLRVRYCPLDTHVDFVAHKVVLASSSPVFRAMFTNGLKECGMEVVPIEGIHPKVMGRLIEFAYTASISVGEKCVIHVMNGAVMYQIDSVVQACCDFLVEQLDPSNAIGIASFAEQIGCTELHQKAREYIYMNFSQVATQEEFFTLSHCQLVTLISRDELNVRCESEVFHACVAWVQYDREERRPYVQALLQAVRCHSLTPHFLQRQLEHFEWDAQSKDYLSQIFRDLTLHKPTKVIPLRTPKVPQLIYTVGGYFRQSLSFLEAFNPCSGAWLRLADLQVPRSGLAACVISGLLYAVGGRNNGPDGNMDSHTLDCYNPMNNCWRPCAHMSVPRNRIGVGVIDGMIYAVGGSHGCTHHNSVERYDPERDSWQLVSPMLTRRIGVGVAVINRLLYAVGGFDGTHRLSSAECYNPERDEWRSIAAMNTVRSGAGVCALGNYIYVMGGYDGTNQLNTVERYDVEKDSWSFSASMRHRRSALGVTTHHGRIYVLGGYDGNTFLDSVECFDPETDSWTEVTHMKSGRSGVGVAVTMEPCHKELIPCQC.

A BTB domain is found at 44–117 (CDVTLRVRYC…AYTASISVGE (74 aa)). The 101-residue stretch at 153 to 253 (IGIASFAEQI…LTPHFLQRQL (101 aa)) folds into the BACK domain. Kelch repeat units follow at residues 292–337 (LIYT…VISG), 338–388 (LLYA…VIDG), 389–435 (MIYA…VINR), 436–482 (LLYA…ALGN), 484–529 (IYVM…THHG), and 530–576 (RIYV…VTME).

The protein belongs to the KEAP1 family. In terms of assembly, homodimer and heterodimer; heterodimerizes with keap1a. Component of the BCR(KEAP1) E3 ubiquitin ligase complex, at least composed of 2 molecules of cul3, 2 molecules of keap1 (keap1a and/or keap1b), and rbx1. Interacts with nfe2l2/nrf2; the interaction is direct. In terms of processing, non-enzymatic covalent modifications of reactive cysteines by electrophile metabolites inactivate the BCR(KEAP1) complex. Widely expressed.

It is found in the cytoplasm. It localises to the nucleus. Its pathway is protein modification; protein ubiquitination. With respect to regulation, ubiquitin ligase activity of the BCR(KEAP1) complex is inhibited by oxidative stress and electrophile metabolites such as sulforaphane. Electrophile metabolites react with reactive cysteine residues in keap1 and trigger non-enzymatic covalent modifications of these cysteine residues, leading to inactivate the ubiquitin ligase activity of the BCR(KEAP1) complex. Substrate-specific adapter of a BCR (BTB-CUL3-RBX1) E3 ubiquitin ligase complex that regulates the response to oxidative stress by targeting nfe2l2/nrf2 for ubiquitination. Keap1 acts as a key sensor of oxidative and electrophilic stress: in normal conditions, the BCR(KEAP1) complex mediates ubiquitination and degradation of nfe2l2/nrf2, a transcription factor regulating expression of many cytoprotective genes. In response to oxidative stress, different electrophile metabolites trigger non-enzymatic covalent modifications of highly reactive cysteine residues in KEAP1, leading to inactivate the ubiquitin ligase activity of the BCR(KEAP1) complex, promoting nfe2l2/nrf2 nuclear accumulation and expression of phase II detoxifying enzymes. This Danio rerio (Zebrafish) protein is Kelch-like ECH-associated protein 1B.